A 504-amino-acid polypeptide reads, in one-letter code: Maturase K (504 aa).

The protein belongs to the intron maturase 2 family. MatK subfamily.

Its subcellular location is the plastid. The protein resides in the chloroplast. Functionally, usually encoded in the trnK tRNA gene intron. Probably assists in splicing its own and other chloroplast group II introns. The chain is Maturase K from Lepidium campestre (Field pepperwort).